We begin with the raw amino-acid sequence, 57 residues long: DNA-directed RNA polymerase subunit Rpo6 (57 aa).

It belongs to the archaeal Rpo6/eukaryotic RPB6 RNA polymerase subunit family. As to quaternary structure, part of the RNA polymerase complex.

Its subcellular location is the cytoplasm. The catalysed reaction is RNA(n) + a ribonucleoside 5'-triphosphate = RNA(n+1) + diphosphate. In terms of biological role, DNA-dependent RNA polymerase (RNAP) catalyzes the transcription of DNA into RNA using the four ribonucleoside triphosphates as substrates. The chain is DNA-directed RNA polymerase subunit Rpo6 from Pyrococcus furiosus (strain ATCC 43587 / DSM 3638 / JCM 8422 / Vc1).